The following is a 218-amino-acid chain: Protein N-lysine methyltransferase METTL21A (218 aa).

Residues Trp-47, 73–75 (GAG), Asp-94, Trp-125, and Ala-143 contribute to the S-adenosyl-L-methionine site.

This sequence belongs to the methyltransferase superfamily. METTL21 family. In terms of assembly, interacts with heat shock protein 70 family members; at least some of these proteins are methylation substrates.

Its subcellular location is the cytoplasm. The enzyme catalyses L-lysyl-[protein] + 3 S-adenosyl-L-methionine = N(6),N(6),N(6)-trimethyl-L-lysyl-[protein] + 3 S-adenosyl-L-homocysteine + 3 H(+). Its function is as follows. Protein-lysine methyltransferase that selectively trimethylates residues in heat shock protein 70 (HSP70) family members. Contributes to the in vivo trimethylation of Lys residues in HSPA1 and HSPA8. In vitro methylates 'Lys-561' in HSPA1, 'Lys-564' in HSPA2, 'Lys-585' in HSPA5, 'Lys-563' in HSPA6 and 'Lys-561' in HSPA8. This chain is Protein N-lysine methyltransferase METTL21A (METTL21A), found in Homo sapiens (Human).